A 285-amino-acid polypeptide reads, in one-letter code: Probable cobalamin biosynthesis protein CobD (285 aa).

4 helical membrane passes run 10-32, 45-67, 145-167, and 266-283; these read LIDL…GKVI, YLDF…ILSH, VIAP…RAVN, and VYWI…IILY.

This sequence belongs to the CobD/CbiB family.

The protein localises to the cell membrane. It functions in the pathway cofactor biosynthesis; adenosylcobalamin biosynthesis. Functionally, converts cobyric acid to cobinamide by the addition of aminopropanol on the F carboxylic group. This is Probable cobalamin biosynthesis protein CobD from Pyrococcus furiosus (strain ATCC 43587 / DSM 3638 / JCM 8422 / Vc1).